The primary structure comprises 263 residues: uncharacterized protein (263 aa).

17-41 (GGGRGLGAAIALAFAQAGADVLIAS) contacts NAD(+). S147 lines the substrate pocket. Y160 (proton acceptor) is an active-site residue. Residue K164 coordinates NAD(+).

It belongs to the short-chain dehydrogenases/reductases (SDR) family.

This is an uncharacterized protein from Mycobacterium tuberculosis (strain CDC 1551 / Oshkosh).